A 20-amino-acid chain; its full sequence is Unknown protein NF009 from 2D-PAGE (20 aa).

Residues 1-20 (ATSAAQGAALDESVRKVLKP) form a disordered region.

The polypeptide is Unknown protein NF009 from 2D-PAGE (Naegleria fowleri (Brain eating amoeba)).